A 307-amino-acid polypeptide reads, in one-letter code: Glutaminase (307 aa).

Positions 66, 116, 160, 167, 191, 243, and 261 each coordinate substrate.

Belongs to the glutaminase family. As to quaternary structure, homotetramer.

The enzyme catalyses L-glutamine + H2O = L-glutamate + NH4(+). This Pseudoalteromonas translucida (strain TAC 125) protein is Glutaminase.